We begin with the raw amino-acid sequence, 233 residues long: UPF0280 protein AF_0649 (233 aa).

The protein belongs to the UPF0280 family.

The chain is UPF0280 protein AF_0649 from Archaeoglobus fulgidus (strain ATCC 49558 / DSM 4304 / JCM 9628 / NBRC 100126 / VC-16).